We begin with the raw amino-acid sequence, 209 residues long: Transmembrane protein 52 (209 aa).

Residues 1–32 (MARGPLAARGLRLLLPLLPLLPLLPLPQVALG) form the signal peptide. Residues 56–76 (VGLILLAVLLLLLCGVTAGCV) form a helical membrane-spanning segment. The disordered stretch occupies residues 145–209 (AYSLYTPEPP…QLPPCSPGAP (65 aa)). A compositionally biased stretch (basic and acidic residues) spans 159 to 170 (EAVKMAKPREEG). The span at 186–202 (LETTPVPQESGPNTQLP) shows a compositional bias: polar residues.

Its subcellular location is the membrane. The protein is Transmembrane protein 52 (TMEM52) of Homo sapiens (Human).